The primary structure comprises 464 residues: tRNA modification GTPase MnmE (464 aa).

(6S)-5-formyl-5,6,7,8-tetrahydrofolate is bound by residues Arg23, Glu84, and Arg123. The TrmE-type G domain occupies 216 to 386 (GARATLVGRP…LGATVARLLL (171 aa)). Asn226 contributes to the K(+) binding site. Residues 226 to 231 (NAGKSS), 245 to 251 (TPIPGTT), and 270 to 273 (DTAG) each bind GTP. Residue Ser230 coordinates Mg(2+). K(+)-binding residues include Thr245, Ile247, and Thr250. Residue Thr251 participates in Mg(2+) binding. Lys464 serves as a coordination point for (6S)-5-formyl-5,6,7,8-tetrahydrofolate.

This sequence belongs to the TRAFAC class TrmE-Era-EngA-EngB-Septin-like GTPase superfamily. TrmE GTPase family. As to quaternary structure, homodimer. Heterotetramer of two MnmE and two MnmG subunits. Requires K(+) as cofactor.

It is found in the cytoplasm. In terms of biological role, exhibits a very high intrinsic GTPase hydrolysis rate. Involved in the addition of a carboxymethylaminomethyl (cmnm) group at the wobble position (U34) of certain tRNAs, forming tRNA-cmnm(5)s(2)U34. The sequence is that of tRNA modification GTPase MnmE from Roseiflexus castenholzii (strain DSM 13941 / HLO8).